Reading from the N-terminus, the 367-residue chain is Glutamate 5-kinase (367 aa).

Residue K10 coordinates ATP. Residues S50, D137, and N149 each coordinate substrate. Residues 169-170 (TD) and 211-217 (TGGMSTK) contribute to the ATP site. Residues 275–353 (AGEITVDEGA…QEIDAILGYE (79 aa)) form the PUA domain.

This sequence belongs to the glutamate 5-kinase family.

Its subcellular location is the cytoplasm. The catalysed reaction is L-glutamate + ATP = L-glutamyl 5-phosphate + ADP. It functions in the pathway amino-acid biosynthesis; L-proline biosynthesis; L-glutamate 5-semialdehyde from L-glutamate: step 1/2. Functionally, catalyzes the transfer of a phosphate group to glutamate to form L-glutamate 5-phosphate. This Escherichia coli O81 (strain ED1a) protein is Glutamate 5-kinase.